Reading from the N-terminus, the 356-residue chain is Phosphoserine aminotransferase (356 aa).

R41 lines the L-glutamate pocket. Pyridoxal 5'-phosphate-binding positions include 75-76 (AT), W100, T147, D166, and Q189. K190 carries the post-translational modification N6-(pyridoxal phosphate)lysine. A pyridoxal 5'-phosphate-binding site is contributed by 227 to 228 (NT).

The protein belongs to the class-V pyridoxal-phosphate-dependent aminotransferase family. SerC subfamily. As to quaternary structure, homodimer. Requires pyridoxal 5'-phosphate as cofactor.

It is found in the cytoplasm. It carries out the reaction O-phospho-L-serine + 2-oxoglutarate = 3-phosphooxypyruvate + L-glutamate. The enzyme catalyses 4-(phosphooxy)-L-threonine + 2-oxoglutarate = (R)-3-hydroxy-2-oxo-4-phosphooxybutanoate + L-glutamate. It participates in amino-acid biosynthesis; L-serine biosynthesis; L-serine from 3-phospho-D-glycerate: step 2/3. In terms of biological role, catalyzes the reversible conversion of 3-phosphohydroxypyruvate to phosphoserine and of 3-hydroxy-2-oxo-4-phosphonooxybutanoate to phosphohydroxythreonine. This chain is Phosphoserine aminotransferase, found in Exiguobacterium sp. (strain ATCC BAA-1283 / AT1b).